The following is a 156-amino-acid chain: ATP synthase subunit b (156 aa).

A helical membrane pass occupies residues Leu7–Ile29.

Belongs to the ATPase B chain family. In terms of assembly, F-type ATPases have 2 components, F(1) - the catalytic core - and F(0) - the membrane proton channel. F(1) has five subunits: alpha(3), beta(3), gamma(1), delta(1), epsilon(1). F(0) has three main subunits: a(1), b(2) and c(10-14). The alpha and beta chains form an alternating ring which encloses part of the gamma chain. F(1) is attached to F(0) by a central stalk formed by the gamma and epsilon chains, while a peripheral stalk is formed by the delta and b chains.

The protein resides in the cell inner membrane. Its function is as follows. F(1)F(0) ATP synthase produces ATP from ADP in the presence of a proton or sodium gradient. F-type ATPases consist of two structural domains, F(1) containing the extramembraneous catalytic core and F(0) containing the membrane proton channel, linked together by a central stalk and a peripheral stalk. During catalysis, ATP synthesis in the catalytic domain of F(1) is coupled via a rotary mechanism of the central stalk subunits to proton translocation. In terms of biological role, component of the F(0) channel, it forms part of the peripheral stalk, linking F(1) to F(0). The polypeptide is ATP synthase subunit b (Vibrio vulnificus (strain CMCP6)).